Reading from the N-terminus, the 121-residue chain is Large ribosomal subunit protein uL14 (121 aa).

It belongs to the universal ribosomal protein uL14 family. Part of the 50S ribosomal subunit. Forms a cluster with proteins L3 and L19. In the 70S ribosome, L14 and L19 interact and together make contacts with the 16S rRNA in bridges B5 and B8.

In terms of biological role, binds to 23S rRNA. Forms part of two intersubunit bridges in the 70S ribosome. In Prochlorococcus marinus (strain MIT 9211), this protein is Large ribosomal subunit protein uL14.